The primary structure comprises 66 residues: Large ribosomal subunit protein bL35 (66 aa).

Basic residues-rich tracts occupy residues 1 to 15 (MSKLKTRSSAAKRFK) and 22 to 43 (ILHKKAGKRHNLSKKSESRKRR). Residues 1 to 43 (MSKLKTRSSAAKRFKVTATGKILHKKAGKRHNLSKKSESRKRR) are disordered.

Belongs to the bacterial ribosomal protein bL35 family.

The protein is Large ribosomal subunit protein bL35 of Dictyoglomus turgidum (strain DSM 6724 / Z-1310).